The primary structure comprises 239 residues: Ubiquinone biosynthesis O-methyltransferase (239 aa).

Residues R44, G63, D84, and M128 each coordinate S-adenosyl-L-methionine.

Belongs to the methyltransferase superfamily. UbiG/COQ3 family.

The enzyme catalyses a 3-demethylubiquinol + S-adenosyl-L-methionine = a ubiquinol + S-adenosyl-L-homocysteine + H(+). It carries out the reaction a 3-(all-trans-polyprenyl)benzene-1,2-diol + S-adenosyl-L-methionine = a 2-methoxy-6-(all-trans-polyprenyl)phenol + S-adenosyl-L-homocysteine + H(+). Its pathway is cofactor biosynthesis; ubiquinone biosynthesis. In terms of biological role, O-methyltransferase that catalyzes the 2 O-methylation steps in the ubiquinone biosynthetic pathway. The polypeptide is Ubiquinone biosynthesis O-methyltransferase (Xanthomonas axonopodis pv. citri (strain 306)).